The following is a 333-amino-acid chain: MDVINLIKNLKQILRTANNERHLIELKNIFVKQHLLPLYDELKKSANKKEMGLLINNFKQQIEFVTDQILKELNDKDDQVDLKKWTNKTLFAPFINNGHHHILNSIIDDIASFFKKLNFEIVSGSEVVSPIYNFDHLNIDENHPARASADSFFINSIKMLRTHCTTTTAQFLENNVNKDIRIMSFGNVYRKDDDDATHSHQFNQVDFVWVKEGLTVANLKWLIDSLIKYLFGQNLKTRYRLSFFPFTEPSFEVDVQCFKCDLKGCAVCKKSTWIEIMGTGMLHENVLKAANINDIRTGMAFGVGIDRIAMLKYEIDDIRYLYSNNFKFNAQIK.

Residue E248 participates in Mg(2+) binding.

Belongs to the class-II aminoacyl-tRNA synthetase family. Phe-tRNA synthetase alpha subunit type 1 subfamily. Tetramer of two alpha and two beta subunits. Mg(2+) is required as a cofactor.

It is found in the cytoplasm. It carries out the reaction tRNA(Phe) + L-phenylalanine + ATP = L-phenylalanyl-tRNA(Phe) + AMP + diphosphate + H(+). This is Phenylalanine--tRNA ligase alpha subunit from Ureaplasma parvum serovar 3 (strain ATCC 27815 / 27 / NCTC 11736).